The following is a 258-amino-acid chain: Redox-sensing transcriptional repressor Rex (258 aa).

Residues 26-65 (LYLRALTALSERSVPTVSSEELAAAAGVNSAKLRKDFSYL) constitute a DNA-binding region (H-T-H motif). 100–105 (GIGNLG) contacts NAD(+). Residues 219 to 258 (AGEEAAADGAAPPVAARKQQRSTGSADQGPDGDVPAVMPA) are disordered. Low complexity predominate over residues 225-234 (ADGAAPPVAA).

Belongs to the transcriptional regulatory Rex family. Homodimer.

The protein localises to the cytoplasm. Functionally, modulates transcription of respiratory genes in response to changes in cellular NADH/NAD(+) redox state. Binds to the DNA sequence motif 5'-TGTGAACGCGTTCACA-3' in the promoter of the cydABCD operon. May play a general role as a sensor of cellular redox balance. The polypeptide is Redox-sensing transcriptional repressor Rex (Streptomyces coelicolor (strain ATCC BAA-471 / A3(2) / M145)).